Consider the following 235-residue polypeptide: Large ribosomal subunit protein uL1 (235 aa).

Belongs to the universal ribosomal protein uL1 family. As to quaternary structure, part of the 50S ribosomal subunit.

Binds directly to 23S rRNA. The L1 stalk is quite mobile in the ribosome, and is involved in E site tRNA release. Functionally, protein L1 is also a translational repressor protein, it controls the translation of the L11 operon by binding to its mRNA. In Rhodospirillum centenum (strain ATCC 51521 / SW), this protein is Large ribosomal subunit protein uL1.